Consider the following 169-residue polypeptide: Cell division inhibitor SulA (169 aa).

The tract at residues 106 to 112 is ftsZ binding; the sequence is ALRTGNY. The interval 162-169 is lon protease binding; that stretch reads KIHSNLYH.

It belongs to the SulA family. Interacts with FtsZ. Post-translationally, is rapidly cleaved and degraded by the Lon protease once DNA damage is repaired.

Component of the SOS system and an inhibitor of cell division. Accumulation of SulA causes rapid cessation of cell division and the appearance of long, non-septate filaments. In the presence of GTP, binds a polymerization-competent form of FtsZ in a 1:1 ratio, thus inhibiting FtsZ polymerization and therefore preventing it from participating in the assembly of the Z ring. This mechanism prevents the premature segregation of damaged DNA to daughter cells during cell division. The sequence is that of Cell division inhibitor SulA from Shigella boydii serotype 4 (strain Sb227).